A 24-amino-acid polypeptide reads, in one-letter code: Brevinin-1CSa (24 aa).

Cysteine 18 and cysteine 24 are joined by a disulfide.

In terms of tissue distribution, expressed by the skin glands.

It is found in the secreted. The protein resides in the target cell membrane. In terms of biological role, antibacterial peptide. Has activity against the Gram-positive bacterium S.aureus (MIC=2 uM) and the Gram-negative bacterium E.coli (MIC=32 uM). Has a strong hemolytic activity (LC(50)=5 uM). This is Brevinin-1CSa from Rana cascadae (Cascades frog).